The following is a 155-amino-acid chain: Ribosome maturation factor RimP (155 aa).

This sequence belongs to the RimP family.

It localises to the cytoplasm. Its function is as follows. Required for maturation of 30S ribosomal subunits. This Prochlorococcus marinus (strain MIT 9301) protein is Ribosome maturation factor RimP.